The sequence spans 62 residues: Defensin-like protein A (62 aa).

Residues 1 to 26 (MRCVVLFMVSCLLIVLLINHFEEVEA) form the signal peptide. Cysteines 42 and 52 form a disulfide.

Belongs to the DEFL family.

The protein resides in the secreted. Functionally, truncated and inactivated form of SCRA, a protein involved in male-mediated self-incompatibility when active. Most A.thaliana cultivars contain such an inactive form and thus, are self-fertiles. The chain is Defensin-like protein A (SCRA) from Arabidopsis thaliana (Mouse-ear cress).